We begin with the raw amino-acid sequence, 144 residues long: Universal stress protein F (144 aa).

This sequence belongs to the universal stress protein A family. As to quaternary structure, homodimer.

The protein is Universal stress protein F (uspF) of Escherichia coli (strain K12).